The chain runs to 155 residues: Large ribosomal subunit protein uL22c (155 aa).

The protein belongs to the universal ribosomal protein uL22 family. In terms of assembly, part of the 50S ribosomal subunit.

It is found in the plastid. The protein resides in the chloroplast. Its function is as follows. This protein binds specifically to 23S rRNA. In terms of biological role, the globular domain of the protein is located near the polypeptide exit tunnel on the outside of the subunit, while an extended beta-hairpin is found that lines the wall of the exit tunnel in the center of the 70S ribosome. The chain is Large ribosomal subunit protein uL22c (rpl22) from Atropa belladonna (Belladonna).